The primary structure comprises 243 residues: Phosphoribosylaminoimidazole-succinocarboxamide synthase (243 aa).

It belongs to the SAICAR synthetase family.

It catalyses the reaction 5-amino-1-(5-phospho-D-ribosyl)imidazole-4-carboxylate + L-aspartate + ATP = (2S)-2-[5-amino-1-(5-phospho-beta-D-ribosyl)imidazole-4-carboxamido]succinate + ADP + phosphate + 2 H(+). The protein operates within purine metabolism; IMP biosynthesis via de novo pathway; 5-amino-1-(5-phospho-D-ribosyl)imidazole-4-carboxamide from 5-amino-1-(5-phospho-D-ribosyl)imidazole-4-carboxylate: step 1/2. In Methanobrevibacter smithii (strain ATCC 35061 / DSM 861 / OCM 144 / PS), this protein is Phosphoribosylaminoimidazole-succinocarboxamide synthase.